The sequence spans 350 residues: Anthranilate phosphoribosyltransferase (350 aa).

5-phospho-alpha-D-ribose 1-diphosphate is bound by residues Gly-93, 96–97 (GD), Thr-101, 103–106 (NIST), 121–129 (KHGNRSASG), and Ser-133. Position 93 (Gly-93) interacts with anthranilate. A Mg(2+)-binding site is contributed by Ser-105. An anthranilate-binding site is contributed by Asn-124. Arg-179 contacts anthranilate. Residues Asp-238 and Glu-239 each coordinate Mg(2+).

This sequence belongs to the anthranilate phosphoribosyltransferase family. As to quaternary structure, homodimer. The cofactor is Mg(2+).

The catalysed reaction is N-(5-phospho-beta-D-ribosyl)anthranilate + diphosphate = 5-phospho-alpha-D-ribose 1-diphosphate + anthranilate. It functions in the pathway amino-acid biosynthesis; L-tryptophan biosynthesis; L-tryptophan from chorismate: step 2/5. Its function is as follows. Catalyzes the transfer of the phosphoribosyl group of 5-phosphorylribose-1-pyrophosphate (PRPP) to anthranilate to yield N-(5'-phosphoribosyl)-anthranilate (PRA). The sequence is that of Anthranilate phosphoribosyltransferase from Parasynechococcus marenigrum (strain WH8102).